Here is a 326-residue protein sequence, read N- to C-terminus: Metal-binding protein YtgA (326 aa).

The signal sequence occupies residues 1-21; it reads MSFFHTRKYKLILRGLLCLAG. Fe(2+) is bound by residues His-75, His-141, His-207, and Asp-299.

This sequence belongs to the bacterial solute-binding protein 9 family. As to quaternary structure, monomer.

It localises to the periplasm. In terms of biological role, part of the ATP-binding cassette (ABC) transport system YtgABCD involved in metal import. Binds Fe(2+), Mn(2+) and Ni(2+), with a preference for Fe(2+) and delivers them to the membrane permease for translocation into the cytoplasm. In Chlamydia trachomatis serovar D (strain ATCC VR-885 / DSM 19411 / UW-3/Cx), this protein is Metal-binding protein YtgA.